Consider the following 211-residue polypeptide: Uracil phosphoribosyltransferase (211 aa).

5-phospho-alpha-D-ribose 1-diphosphate contacts are provided by residues Arg-78, Arg-103, and 130 to 138; that span reads DPMLATGGT. Uracil-binding positions include Ile-196 and 201 to 203; that span reads GDA. Asp-202 provides a ligand contact to 5-phospho-alpha-D-ribose 1-diphosphate.

Belongs to the UPRTase family. It depends on Mg(2+) as a cofactor.

It catalyses the reaction UMP + diphosphate = 5-phospho-alpha-D-ribose 1-diphosphate + uracil. It participates in pyrimidine metabolism; UMP biosynthesis via salvage pathway; UMP from uracil: step 1/1. Allosterically activated by GTP. Functionally, catalyzes the conversion of uracil and 5-phospho-alpha-D-ribose 1-diphosphate (PRPP) to UMP and diphosphate. The protein is Uracil phosphoribosyltransferase of Beutenbergia cavernae (strain ATCC BAA-8 / DSM 12333 / CCUG 43141 / JCM 11478 / NBRC 16432 / NCIMB 13614 / HKI 0122).